Consider the following 64-residue polypeptide: Alpha-conotoxin CnIL (64 aa).

The N-terminal stretch at 1–21 (MGMRMMFTVFLLVVLTTTVVS) is a signal peptide. The propeptide occupies 22-49 (FPSDSASDGRDDEAKDERSDIYESKRDG). Disulfide bonds link cysteine 51/cysteine 56 and cysteine 52/cysteine 62. Cysteine 62 bears the Cysteine amide mark.

Belongs to the conotoxin A superfamily. Expressed by the venom duct.

It is found in the secreted. The protein is Alpha-conotoxin CnIL of Conus consors (Singed cone).